Here is a 734-residue protein sequence, read N- to C-terminus: ABC transporter D family member 1 (734 aa).

4 consecutive transmembrane segments (helical) span residues 52-72, 112-132, 177-197, and 204-224; these read IIKI…ILFG, FAIG…SIMA, FTTL…VVVY, and TTID…GYLI. Residues 63–351 form the ABC transmembrane type-1 domain; it reads PLTLFLILFG…VEEEQAKIQF (289 aa). The segment covering 271–286 has biased composition (basic and acidic residues); that stretch reads HPEKRFDNNDYDHGYE. The interval 271–296 is disordered; the sequence is HPEKRFDNNDYDHGYESDDSDQSCDE. Residues 332 to 359 are a coiled coil; it reads DSNDQKEELLVEEEQAKIQFEALLKNKK. The chain crosses the membrane as a helical span at residues 374–394; it reads LFTYLSPIANYFIIAIPVFFL. The ABC transporter domain maps to 492–729; the sequence is ITLDDVTYFT…NNNNTNKIAE (238 aa). 525-532 lines the ATP pocket; it reads GPSGSGKS. Positions 712-725 are enriched in low complexity; that stretch reads QSNNINNNNNNNTN. The segment at 712–734 is disordered; it reads QSNNINNNNNNNTNKIAEDSVFD.

The protein belongs to the ABC transporter superfamily. ABCD family. Peroxisomal fatty acyl CoA transporter (TC 3.A.1.203) subfamily.

The protein resides in the membrane. The enzyme catalyses (9Z)-octadecenoyl-CoA(in) = (9Z)-octadecenoyl-CoA(out). This is ABC transporter D family member 1 (abcD1) from Dictyostelium discoideum (Social amoeba).